Here is a 143-residue protein sequence, read N- to C-terminus: Anti-sigma F factor (143 aa).

Belongs to the anti-sigma-factor family.

It catalyses the reaction L-seryl-[protein] + ATP = O-phospho-L-seryl-[protein] + ADP + H(+). The enzyme catalyses L-threonyl-[protein] + ATP = O-phospho-L-threonyl-[protein] + ADP + H(+). Functionally, binds to sigma F and blocks its ability to form an RNA polymerase holoenzyme (E-sigma F). Phosphorylates SpoIIAA on a serine residue. This phosphorylation may enable SpoIIAA to act as an anti-anti-sigma factor that counteracts SpoIIAB and thus releases sigma F from inhibition. This is Anti-sigma F factor from Clostridium botulinum (strain Alaska E43 / Type E3).